Consider the following 418-residue polypeptide: Lariat debranching enzyme (418 aa).

Residues Cys8, His10, Asp39, and Asn84 each coordinate a divalent metal cation. A lariat recognition loop region spans residues 124 to 154 (SGIYNERHYRSGHFERPPYNESTIRSVYHVR). Residues His174, His226, and His228 each contribute to the a divalent metal cation site. Residues 372-418 (GERTDIPASLAPSDLPTYDSEEIPIDDIDEIEEMEEAKADDHTRDDA) form a disordered region. Positions 390–406 (DSEEIPIDDIDEIEEME) are enriched in acidic residues. Residues 407–418 (EAKADDHTRDDA) are compositionally biased toward basic and acidic residues.

The protein belongs to the lariat debranching enzyme family. The cofactor is Fe(2+). Requires Zn(2+) as cofactor. Mn(2+) is required as a cofactor. As to expression, widely expressed. Expressed in roots, stems, cauline and rosette leaves, flower buds and siliques.

It localises to the nucleus. With respect to regulation, active in presence of diverse metals including Fe(2+), Zn(2+), Mn(2+). Binds two metal cations in two adjacent alpha and beta metal-binding pockets. Its function is as follows. Cleaves the 2'-5' phosphodiester linkage at the branch point of lariat intron pre-mRNAs after splicing and converts them into linear molecules that are subsequently degraded. It thereby facilitates ribonucleotide turnover. It may also participate in retrovirus replication via an RNA lariat intermediate in cDNA synthesis. Plays en essential role during embryogenesis. The protein is Lariat debranching enzyme (DBR1) of Arabidopsis thaliana (Mouse-ear cress).